Here is a 185-residue protein sequence, read N- to C-terminus: UPF0397 protein CPF_1836 (185 aa).

The next 5 membrane-spanning stretches (helical) occupy residues 11–31, 44–64, 71–91, 111–131, and 149–169; these read IVAI…GSLP, AFLA…IGFI, IVFF…VGLI, IFMF…LVAP, and GVIG…ILIA.

It belongs to the UPF0397 family.

The protein resides in the cell membrane. The protein is UPF0397 protein CPF_1836 of Clostridium perfringens (strain ATCC 13124 / DSM 756 / JCM 1290 / NCIMB 6125 / NCTC 8237 / Type A).